Reading from the N-terminus, the 366-residue chain is Alanine racemase (366 aa).

The active-site Proton acceptor; specific for D-alanine is the Lys33. Lys33 bears the N6-(pyridoxal phosphate)lysine mark. Arg129 is a binding site for substrate. The Proton acceptor; specific for L-alanine role is filled by Tyr253. Residue Met301 coordinates substrate.

This sequence belongs to the alanine racemase family. It depends on pyridoxal 5'-phosphate as a cofactor.

The enzyme catalyses L-alanine = D-alanine. It functions in the pathway amino-acid biosynthesis; D-alanine biosynthesis; D-alanine from L-alanine: step 1/1. In terms of biological role, catalyzes the interconversion of L-alanine and D-alanine. May also act on other amino acids. This Xanthomonas axonopodis pv. citri (strain 306) protein is Alanine racemase (alr).